We begin with the raw amino-acid sequence, 118 residues long: UPF0295 protein BA_0538/GBAA_0538/BAS0506 (118 aa).

The next 2 helical transmembrane spans lie at 12-32 and 43-63; these read IRTF…LGVF and FMMV…WIGM.

Belongs to the UPF0295 family.

Its subcellular location is the cell membrane. The chain is UPF0295 protein BA_0538/GBAA_0538/BAS0506 from Bacillus anthracis.